The following is a 742-amino-acid chain: 5-methyltetrahydropteroyltriglutamate--homocysteine methyltransferase (742 aa).

Residues 18–21 and Lys-112 contribute to the 5-methyltetrahydropteroyltri-L-glutamate site; that span reads REWK. Residues 420 to 422 and Glu-473 each bind L-homocysteine; that span reads IGS. Residues 420-422 and Glu-473 contribute to the L-methionine site; that span reads IGS. Trp-550 serves as a coordination point for 5-methyltetrahydropteroyltri-L-glutamate. Position 588 (Asp-588) interacts with L-homocysteine. Asp-588 is a binding site for L-methionine. Glu-594 contacts 5-methyltetrahydropteroyltri-L-glutamate. Zn(2+) contacts are provided by His-630, Cys-632, and Glu-654. Catalysis depends on His-683, which acts as the Proton donor. Cys-715 lines the Zn(2+) pocket.

Belongs to the vitamin-B12 independent methionine synthase family. It depends on Zn(2+) as a cofactor.

The enzyme catalyses 5-methyltetrahydropteroyltri-L-glutamate + L-homocysteine = tetrahydropteroyltri-L-glutamate + L-methionine. It participates in amino-acid biosynthesis; L-methionine biosynthesis via de novo pathway; L-methionine from L-homocysteine (MetE route): step 1/1. Catalyzes the transfer of a methyl group from 5-methyltetrahydrofolate to homocysteine resulting in methionine formation. This Staphylococcus aureus (strain USA300) protein is 5-methyltetrahydropteroyltriglutamate--homocysteine methyltransferase.